A 283-amino-acid chain; its full sequence is Type III pantothenate kinase (283 aa).

Residue aspartate 9 to lysine 16 coordinates ATP. Substrate contacts are provided by residues tyrosine 116 and glycine 123–arginine 126. Aspartate 125 functions as the Proton acceptor in the catalytic mechanism. Position 149 (threonine 149) interacts with ATP. Substrate is bound at residue threonine 211.

The protein belongs to the type III pantothenate kinase family. In terms of assembly, homodimer. NH4(+) serves as cofactor. Requires K(+) as cofactor.

It localises to the cytoplasm. The enzyme catalyses (R)-pantothenate + ATP = (R)-4'-phosphopantothenate + ADP + H(+). It functions in the pathway cofactor biosynthesis; coenzyme A biosynthesis; CoA from (R)-pantothenate: step 1/5. Its function is as follows. Catalyzes the phosphorylation of pantothenate (Pan), the first step in CoA biosynthesis. The chain is Type III pantothenate kinase from Cupriavidus taiwanensis (strain DSM 17343 / BCRC 17206 / CCUG 44338 / CIP 107171 / LMG 19424 / R1) (Ralstonia taiwanensis (strain LMG 19424)).